Here is a 512-residue protein sequence, read N- to C-terminus: NADH-quinone oxidoreductase subunit N 2 (512 aa).

A run of 14 helical transmembrane segments spans residues 23-43 (AFVP…IDLF), 50-70 (TIIP…VYLQ), 88-108 (FAIF…LISI), 120-140 (SLGE…LMAS), 144-164 (LLMM…LVGY), 179-199 (VIYG…IYGL), 220-240 (ITLM…AGVV), 254-274 (PTPI…AMLI), 295-315 (WVTL…VVAL), 323-343 (LLAY…IVAD), 351-371 (LFYL…IILI), 394-414 (AASL…VGFI), 429-449 (VFVW…YFYF), and 477-497 (LVAF…PLSV).

It belongs to the complex I subunit 2 family. NDH-1 is composed of 14 different subunits. Subunits NuoA, H, J, K, L, M, N constitute the membrane sector of the complex.

The protein resides in the cell inner membrane. The catalysed reaction is a quinone + NADH + 5 H(+)(in) = a quinol + NAD(+) + 4 H(+)(out). Its function is as follows. NDH-1 shuttles electrons from NADH, via FMN and iron-sulfur (Fe-S) centers, to quinones in the respiratory chain. The immediate electron acceptor for the enzyme in this species is believed to be a menaquinone. Couples the redox reaction to proton translocation (for every two electrons transferred, four hydrogen ions are translocated across the cytoplasmic membrane), and thus conserves the redox energy in a proton gradient. In Chloroherpeton thalassium (strain ATCC 35110 / GB-78), this protein is NADH-quinone oxidoreductase subunit N 2.